The chain runs to 103 residues: Large ribosomal subunit protein bL21 (103 aa).

The protein belongs to the bacterial ribosomal protein bL21 family. Part of the 50S ribosomal subunit. Contacts protein L20.

In terms of biological role, this protein binds to 23S rRNA in the presence of protein L20. The protein is Large ribosomal subunit protein bL21 of Burkholderia mallei (strain NCTC 10247).